Reading from the N-terminus, the 367-residue chain is Histidinol-phosphate aminotransferase 1 (367 aa).

An N6-(pyridoxal phosphate)lysine modification is found at K229.

The protein belongs to the class-II pyridoxal-phosphate-dependent aminotransferase family. Histidinol-phosphate aminotransferase subfamily. In terms of assembly, homodimer. Requires pyridoxal 5'-phosphate as cofactor.

It catalyses the reaction L-histidinol phosphate + 2-oxoglutarate = 3-(imidazol-4-yl)-2-oxopropyl phosphate + L-glutamate. It participates in amino-acid biosynthesis; L-histidine biosynthesis; L-histidine from 5-phospho-alpha-D-ribose 1-diphosphate: step 7/9. This is Histidinol-phosphate aminotransferase 1 from Idiomarina loihiensis (strain ATCC BAA-735 / DSM 15497 / L2-TR).